The chain runs to 913 residues: Eukaryotic translation initiation factor 3 subunit C (913 aa).

A disordered region spans residues 1–31 (MSRFFANGSDSESESSEEEVQASNFNKANNF). Positions 11-20 (SESESSEEEV) are enriched in acidic residues. Residues 21-31 (QASNFNKANNF) show a composition bias toward polar residues. 4 positions are modified to phosphoserine: serine 34, serine 165, serine 177, and serine 186. Disordered regions lie at residues 157–195 (FREAPDQESDVDEGEGEAHDSDAERAGADSDGGIGAGTG) and 208–285 (PTKV…EDGE). The segment covering 162–171 (DQESDVDEGE) has biased composition (acidic residues). Residues 172 to 184 (GEAHDSDAERAGA) are compositionally biased toward basic and acidic residues. Residues 214 to 239 (DEDDSDDSIDWDSDTESETESSEDEN) show a composition bias toward acidic residues. The segment covering 244 to 263 (MRERFLKRTTEKEDKDDDKR) has biased composition (basic and acidic residues). The segment covering 264–276 (KDKRKEQKHKVRK) has biased composition (basic residues). Residues 645-821 (FHMHINLELL…ETVVMHRSEP (177 aa)) enclose the PCI domain. The tract at residues 856-913 (RGNMGNRDRGYNRNQNNQGGNWGGQRRDNRNQRNRNQRGHHKQQQQQQQQQVQTIEEE) is disordered. Residues 887–898 (QRNRNQRGHHKQ) are compositionally biased toward basic residues.

Belongs to the eIF-3 subunit C family. Component of the eukaryotic translation initiation factor 3 (eIF-3) complex. The eIF-3 complex interacts with pix.

It localises to the cytoplasm. In terms of biological role, component of the eukaryotic translation initiation factor 3 (eIF-3) complex, which is involved in protein synthesis of a specialized repertoire of mRNAs and, together with other initiation factors, stimulates binding of mRNA and methionyl-tRNAi to the 40S ribosome. The eIF-3 complex specifically targets and initiates translation of a subset of mRNAs involved in cell proliferation. This is Eukaryotic translation initiation factor 3 subunit C from Drosophila virilis (Fruit fly).